Here is a 262-residue protein sequence, read N- to C-terminus: Hemin import ATP-binding protein HmuV (262 aa).

Positions 3 to 244 constitute an ABC transporter domain; it reads LQARNLTLAR…DHMRRVYGIE (242 aa). Residue 35-42 participates in ATP binding; it reads GANGAGKS.

The protein belongs to the ABC transporter superfamily. Heme (hemin) importer (TC 3.A.1.14.5) family. As to quaternary structure, the complex is composed of two ATP-binding proteins (HmuV), two transmembrane proteins (HmuU) and a solute-binding protein (HmuT).

The protein localises to the cell inner membrane. Functionally, part of the ABC transporter complex HmuTUV involved in hemin import. Responsible for energy coupling to the transport system. This Bordetella pertussis (strain Tohama I / ATCC BAA-589 / NCTC 13251) protein is Hemin import ATP-binding protein HmuV.